Here is a 322-residue protein sequence, read N- to C-terminus: Beta-ketoacyl-[acyl-carrier-protein] synthase III (322 aa).

Residues Cys-113 and His-249 contribute to the active site. Positions 250 to 254 (QANLR) are ACP-binding. Asn-279 is a catalytic residue.

The protein belongs to the thiolase-like superfamily. FabH family. In terms of assembly, homodimer.

The protein resides in the cytoplasm. It catalyses the reaction malonyl-[ACP] + acetyl-CoA + H(+) = 3-oxobutanoyl-[ACP] + CO2 + CoA. Its pathway is lipid metabolism; fatty acid biosynthesis. In terms of biological role, catalyzes the condensation reaction of fatty acid synthesis by the addition to an acyl acceptor of two carbons from malonyl-ACP. Catalyzes the first condensation reaction which initiates fatty acid synthesis and may therefore play a role in governing the total rate of fatty acid production. Possesses both acetoacetyl-ACP synthase and acetyl transacylase activities. Its substrate specificity determines the biosynthesis of branched-chain and/or straight-chain of fatty acids. The protein is Beta-ketoacyl-[acyl-carrier-protein] synthase III of Granulibacter bethesdensis (strain ATCC BAA-1260 / CGDNIH1).